A 483-amino-acid polypeptide reads, in one-letter code: MARAIMFQGTGSDVGKSVLVAGLCRVARNRGLKVRPFKPQNMSNNAAVSDDGGEIGRAQWLQALACGVPSSVHMNPVLLKPQTDMGSQLIVQGQVRGEARGRYYQELKPQLMAAVMESFAKVGDGADLVLVEGAGSPAEINLRAGDIANMGFATHADVPVVLVGDIDRGGVIASLVGTHTILPQEDRAMVRGFLINKFRGDISLFDDSLAAITRFTGWRSFGVVPWLKAVSRLPAEDSVVLERAVRGDKKALIVAVPMLPRIANFDDLDPLKAEPAVEVVMVPPGSSLPADAGLVVLPGTKSTIADLLALRENGWDRELVAHVKRGGHVLGICGGFQMLGRRISDPAGIEGNVRDIEGLGLLDIETMTEPEKVVRNVEAVSLLHDEPLEGYEIHIGRTSGPDMARPFARIGDHDDGAVSPDGRIMGTYLHGVFSADRFRHHFLRALGVEGGQMNYRESVEEALGELAEGLEASLDIDGLFALA.

The GATase cobBQ-type domain occupies 251-438; sequence ALIVAVPMLP…LHGVFSADRF (188 aa). Cysteine 333 acts as the Nucleophile in catalysis. The active site involves histidine 430.

It belongs to the CobB/CobQ family. CobQ subfamily.

It participates in cofactor biosynthesis; adenosylcobalamin biosynthesis. Catalyzes amidations at positions B, D, E, and G on adenosylcobyrinic A,C-diamide. NH(2) groups are provided by glutamine, and one molecule of ATP is hydrogenolyzed for each amidation. The chain is Cobyric acid synthase from Brucella melitensis biotype 2 (strain ATCC 23457).